Here is a 1152-residue protein sequence, read N- to C-terminus: Nardilysin (1152 aa).

The signal sequence occupies residues 1-20 (MLRKVTVAAVCATRRKLCEA). Disordered stretches follow at residues 81–108 (LGADESEEEGRRGSLSNAGDPEIVKSPS) and 133–208 (MEGK…KKTT). Serine 86, serine 94, and serine 96 each carry phosphoserine. Residues 141–198 (TDDEEEEEVEEEEEDDDEDSGAEIEDDDEEGFDDEDEFDDEHDDDLDTEDNELEELEE) are compositionally biased toward acidic residues. Residue histidine 234 participates in Zn(2+) binding. Residue glutamate 237 is the Proton acceptor of the active site. Zn(2+) is bound by residues histidine 238 and glutamate 315.

The protein belongs to the peptidase M16 family. In terms of assembly, interacts with BACE1 and NRG1. It depends on Zn(2+) as a cofactor.

The protein resides in the mitochondrion. Its subcellular location is the cell projection. It is found in the dendrite. It catalyses the reaction Hydrolysis of polypeptides, preferably at -Xaa-|-Arg-Lys-, and less commonly at -Arg-|-Arg-Xaa-, in which Xaa is not Arg or Lys.. Functionally, cleaves peptide substrates on the N-terminus of arginine residues in dibasic pairs. Is a critical activator of BACE1- and ADAM17-mediated pro-neuregulin ectodomain shedding, involved in the positive regulation of axonal maturation and myelination. Required for proper functioning of 2-oxoglutarate dehydrogenase (OGDH). The protein is Nardilysin of Pongo abelii (Sumatran orangutan).